The sequence spans 2213 residues: Protein sidekick-1 (2213 aa).

The interval 1–73 (MARGARPSAA…GAGRCGGRRA (73 aa)) is disordered. The segment covering 23 to 38 (AGPGRPRGSPPGRARP) has biased composition (low complexity). Ig-like C2-type domains lie at 104-186 (PYFK…SEVQ), 191-277 (GSFM…SPFI), 293-378 (PTIV…RATA), 386-476 (PYFT…LDVT), and 480-569 (PVFT…ATLT). The cysteines at positions 126 and 169 are disulfide-linked. 2 N-linked (GlcNAc...) asparagine glycosylation sites follow: asparagine 271 and asparagine 301. 3 disulfide bridges follow: cysteine 315/cysteine 362, cysteine 408/cysteine 458, and cysteine 501/cysteine 553. N-linked (GlcNAc...) asparagine glycans are attached at residues asparagine 550, asparagine 563, and asparagine 572. One can recognise an Ig-like C2-type 6 domain in the interval 574-663 (TSIVHPPEDH…GNDSRMARLE (90 aa)). A disulfide bridge links cysteine 595 with cysteine 647. N-linked (GlcNAc...) asparagine glycans are attached at residues asparagine 655, asparagine 679, asparagine 782, asparagine 821, asparagine 882, asparagine 1015, and asparagine 1024. Fibronectin type-III domains lie at 670–766 (SPQN…LPEE), 771–867 (PPKN…TLQG), 872–970 (PPQN…TQED), 974–1068 (AVGH…VPPD), 1072–1171 (APSN…TLQA), 1176–1274 (APTS…TRES), 1279–1376 (APEN…TKDD), 1380–1474 (PPVR…TEKR), 1479–1576 (PPRE…TLQD), 1581–1699 (PPGS…VGEA), 1704–1800 (APQN…THQA), 1804–1899 (APSF…AGPA), and 1902–2000 (SPGS…SAQV). Asparagine 1282 and asparagine 1333 each carry an N-linked (GlcNAc...) asparagine glycan. Residues asparagine 1654, asparagine 1748, asparagine 1767, asparagine 1819, and asparagine 1893 are each glycosylated (N-linked (GlcNAc...) asparagine). Residues 2010–2030 (FLLVMALSSLIVILLVVFALV) form a helical membrane-spanning segment. The Cytoplasmic portion of the chain corresponds to 2031-2213 (LHGQNKKYKN…TPLTGFSSFV (183 aa)). Residues 2075–2098 (STFSKKNGTRSPPRPSPGGLHYSD) form a disordered region. The PDZ-binding signature appears at 2207-2213 (TGFSSFV).

This sequence belongs to the sidekick family. As to quaternary structure, homodimer; mediates homophilic interactions to promote cell adhesion. As to expression, up-regulated in glomeruli in HIV-associated nephropathy. In diseased glomeruli, significantly overexpressed and the expression is no longer restricted to mesangial cells but includes podocytes and parietal epithelial cells.

The protein localises to the cell membrane. It is found in the synapse. Functionally, adhesion molecule that promotes lamina-specific synaptic connections in the retina. Expressed in specific subsets of interneurons and retinal ganglion cells (RGCs) and promotes synaptic connectivity via homophilic interactions. In Homo sapiens (Human), this protein is Protein sidekick-1.